We begin with the raw amino-acid sequence, 37 residues long: Large ribosomal subunit protein bL36 (37 aa).

Belongs to the bacterial ribosomal protein bL36 family.

The protein is Large ribosomal subunit protein bL36 of Halothermothrix orenii (strain H 168 / OCM 544 / DSM 9562).